The primary structure comprises 353 residues: UPF0283 membrane protein YcjF (353 aa).

Over residues 1–19 the composition is skewed to basic and acidic residues; it reads MSEPLKPRIDFAEPLKEEP. The disordered stretch occupies residues 1 to 35; the sequence is MSEPLKPRIDFAEPLKEEPTSAFKAQQTFSEAESR. Transmembrane regions (helical) follow at residues 70–90, 100–120, and 213–233; these read MVMG…VQWT, VALG…GSVV, and ESTL…FIAW.

Belongs to the UPF0283 family.

The protein localises to the cell inner membrane. The sequence is that of UPF0283 membrane protein YcjF from Salmonella gallinarum (strain 287/91 / NCTC 13346).